The following is a 40-amino-acid chain: Photosystem II reaction center protein J (40 aa).

The chain crosses the membrane as a helical span at residues 8–28 (IPLWIIGTVTGIIVIGLIGIF).

The protein belongs to the PsbJ family. As to quaternary structure, PSII is composed of 1 copy each of membrane proteins PsbA, PsbB, PsbC, PsbD, PsbE, PsbF, PsbH, PsbI, PsbJ, PsbK, PsbL, PsbM, PsbT, PsbX, PsbY, PsbZ, Psb30/Ycf12, at least 3 peripheral proteins of the oxygen-evolving complex and a large number of cofactors. It forms dimeric complexes.

It localises to the plastid. Its subcellular location is the chloroplast thylakoid membrane. One of the components of the core complex of photosystem II (PSII). PSII is a light-driven water:plastoquinone oxidoreductase that uses light energy to abstract electrons from H(2)O, generating O(2) and a proton gradient subsequently used for ATP formation. It consists of a core antenna complex that captures photons, and an electron transfer chain that converts photonic excitation into a charge separation. The sequence is that of Photosystem II reaction center protein J from Morus indica (Mulberry).